Consider the following 363-residue polypeptide: 2,5-diketocamphane 1,2-monooxygenase 2 (363 aa).

FMN is bound by residues methionine 74 and 186-194 (TGLTKNSSS).

It belongs to the bacterial luciferase oxidoreductase family. As to quaternary structure, homodimer. Likely forms a loose transient complex with a P.putida flavin reductase that provides the required FMNH(2) to the enzyme.

It carries out the reaction (1R,4R)-bornane-2,5-dione + FMNH2 + O2 = (1R,4R)-5-oxo-1,2-campholide + FMN + H2O + H(+). It participates in terpene metabolism; (R)-camphor degradation. In terms of biological role, involved in the degradation and assimilation of (+)-camphor, which allows P.putida strain NCIMB 10007 to grow on this enantiomer of camphor as the sole carbon source. Catalyzes the FMNH(2)-dependent lactonization of 2,5-diketocamphane via a Baeyer-Villiger oxidation to produce the unstable lactone 5-oxo-1,2-campholide with (R,R) configuration, that presumably undergoes spontaneous hydrolysis to form 2-oxo-Delta(3)-4,5,5-trimethylcyclopentenylacetate. Is also able to convert (+)-camphor and norcamphor to the corresponding lactone in vitro. Shows no conversion of (-)-camphor, (+)-fenchone, (-)-fenchone, and (+)-nopinone. Acts on other bicyclic ketones and, to a lesser extent, on some 2- and 4-substituted monocyclic ketones. The protein is 2,5-diketocamphane 1,2-monooxygenase 2 of Pseudomonas putida (Arthrobacter siderocapsulatus).